We begin with the raw amino-acid sequence, 257 residues long: Small ribosomal subunit protein eS1 (257 aa).

Residues T236–V257 form a disordered region. Positions E239 to D248 are enriched in basic and acidic residues.

This sequence belongs to the eukaryotic ribosomal protein eS1 family. As to quaternary structure, component of the small ribosomal subunit. Mature ribosomes consist of a small (40S) and a large (60S) subunit. The 40S subunit contains about 33 different proteins and 1 molecule of RNA (18S). The 60S subunit contains about 49 different proteins and 3 molecules of RNA (28S, 5.8S and 5S).

The protein localises to the cytoplasm. In Brugia malayi (Filarial nematode worm), this protein is Small ribosomal subunit protein eS1.